The chain runs to 317 residues: Ribosomal protein L11 methyltransferase (317 aa).

The S-adenosyl-L-methionine site is built by T169, G190, D211, and N256.

The protein belongs to the methyltransferase superfamily. PrmA family.

It localises to the cytoplasm. The enzyme catalyses L-lysyl-[protein] + 3 S-adenosyl-L-methionine = N(6),N(6),N(6)-trimethyl-L-lysyl-[protein] + 3 S-adenosyl-L-homocysteine + 3 H(+). Methylates ribosomal protein L11. The chain is Ribosomal protein L11 methyltransferase from Helicobacter hepaticus (strain ATCC 51449 / 3B1).